The following is a 466-amino-acid chain: Purple acid phosphatase 6 (466 aa).

Positions 1 to 20 (MKNLVIFAFLFLSITTVING) are cleaved as a signal peptide. Asn-88 carries N-linked (GlcNAc...) asparagine glycosylation. Asp-164 contributes to the Fe cation binding site. Asn-172 carries an N-linked (GlcNAc...) asparagine glycan. Asp-192 and Tyr-195 together coordinate Fe cation. Residue Asp-192 participates in Zn(2+) binding. Asn-229 and His-314 together coordinate Zn(2+). Asn-229 is a binding site for substrate. The active-site Proton donor is the His-324. His-351 provides a ligand contact to Zn(2+). 351-353 (HVH) contributes to the substrate binding site. His-353 contacts Fe cation. Asn-367 and Asn-424 each carry an N-linked (GlcNAc...) asparagine glycan.

Belongs to the metallophosphoesterase superfamily. Purple acid phosphatase family. As to quaternary structure, homodimer. Requires Fe cation as cofactor. It depends on Zn(2+) as a cofactor. In terms of tissue distribution, specifically expressed in flowers.

The protein localises to the secreted. It catalyses the reaction a phosphate monoester + H2O = an alcohol + phosphate. The sequence is that of Purple acid phosphatase 6 (PAP6) from Arabidopsis thaliana (Mouse-ear cress).